The sequence spans 366 residues: Cobalt-precorrin-5B C(1)-methyltransferase (366 aa).

This sequence belongs to the CbiD family.

It carries out the reaction Co-precorrin-5B + S-adenosyl-L-methionine = Co-precorrin-6A + S-adenosyl-L-homocysteine. Its pathway is cofactor biosynthesis; adenosylcobalamin biosynthesis; cob(II)yrinate a,c-diamide from sirohydrochlorin (anaerobic route): step 6/10. Its function is as follows. Catalyzes the methylation of C-1 in cobalt-precorrin-5B to form cobalt-precorrin-6A. The sequence is that of Cobalt-precorrin-5B C(1)-methyltransferase from Paraburkholderia phymatum (strain DSM 17167 / CIP 108236 / LMG 21445 / STM815) (Burkholderia phymatum).